We begin with the raw amino-acid sequence, 448 residues long: MPLSHFSDLLTVSQLNIRVRDILEKNIGQIWLMAEISNFSQPSSGHWYFTLKDERTQVRCTMFRNNNRHIFFKVQNGLQVLVRACVSLYEPRGEYQLIVESMEPAGEGILRQKFEQLKKKLAAEGLFAEKYKKPLPDSVKQLGVITSISGAALFDILKVLQHRDPSLPVVIYPTKVQGEYAPSQIVKALSIANRRAECDLVILARGGGSLEDLSCFNDERVARAIFDSDLPIVSAIGHETDVSIADLVADLRASTPSAAAERVTRDRRDIIQKLGSHQQRMAMAMDYYFSKLRQRFVHLSHCIEQQHPQLELERQKMQLIHFKISMEKIIQAKLKGLIHQEAHLKKNVLRRAPQIQIYQYQKQIQEEFHQLKAAMERKIHHYVQRFAVVSSRLETVSPLATLARGYSVTCFSSGSMLKKIEQVQIGDELNTRLQGGWIKSQVLEIKKN.

This sequence belongs to the XseA family. Heterooligomer composed of large and small subunits.

The protein localises to the cytoplasm. The catalysed reaction is Exonucleolytic cleavage in either 5'- to 3'- or 3'- to 5'-direction to yield nucleoside 5'-phosphates.. In terms of biological role, bidirectionally degrades single-stranded DNA into large acid-insoluble oligonucleotides, which are then degraded further into small acid-soluble oligonucleotides. In Hamiltonella defensa subsp. Acyrthosiphon pisum (strain 5AT), this protein is Exodeoxyribonuclease 7 large subunit.